We begin with the raw amino-acid sequence, 792 residues long: Probable phosphoketolase (792 aa).

This sequence belongs to the XFP family. Thiamine diphosphate is required as a cofactor.

In Brucella melitensis biotype 1 (strain ATCC 23456 / CCUG 17765 / NCTC 10094 / 16M), this protein is Probable phosphoketolase.